The following is a 317-amino-acid chain: Methionyl-tRNA formyltransferase (317 aa).

Residue 112-115 (SLLP) participates in (6S)-5,6,7,8-tetrahydrofolate binding.

It belongs to the Fmt family.

It catalyses the reaction L-methionyl-tRNA(fMet) + (6R)-10-formyltetrahydrofolate = N-formyl-L-methionyl-tRNA(fMet) + (6S)-5,6,7,8-tetrahydrofolate + H(+). In terms of biological role, attaches a formyl group to the free amino group of methionyl-tRNA(fMet). The formyl group appears to play a dual role in the initiator identity of N-formylmethionyl-tRNA by promoting its recognition by IF2 and preventing the misappropriation of this tRNA by the elongation apparatus. This chain is Methionyl-tRNA formyltransferase, found in Mycobacterium avium (strain 104).